A 173-amino-acid polypeptide reads, in one-letter code: Acireductone dioxygenase (173 aa).

Residues 1 to 21 are disordered; the sequence is MKFYYHDNDSSVDQCAPHDSG. Residues H84, H86, E90, and H129 each coordinate Fe(2+). Ni(2+) contacts are provided by H84, H86, E90, and H129.

This sequence belongs to the acireductone dioxygenase (ARD) family. The cofactor is Fe(2+). Ni(2+) serves as cofactor.

The protein localises to the cytoplasm. The protein resides in the nucleus. It carries out the reaction 1,2-dihydroxy-5-(methylsulfanyl)pent-1-en-3-one + O2 = 4-methylsulfanyl-2-oxobutanoate + formate + 2 H(+). The catalysed reaction is 1,2-dihydroxy-5-(methylsulfanyl)pent-1-en-3-one + O2 = 3-(methylsulfanyl)propanoate + CO + formate + 2 H(+). The protein operates within amino-acid biosynthesis; L-methionine biosynthesis via salvage pathway; L-methionine from S-methyl-5-thio-alpha-D-ribose 1-phosphate: step 5/6. Catalyzes 2 different reactions between oxygen and the acireductone 1,2-dihydroxy-3-keto-5-methylthiopentene (DHK-MTPene) depending upon the metal bound in the active site. Fe-containing acireductone dioxygenase (Fe-ARD) produces formate and 2-keto-4-methylthiobutyrate (KMTB), the alpha-ketoacid precursor of methionine in the methionine recycle pathway. Ni-containing acireductone dioxygenase (Ni-ARD) produces methylthiopropionate, carbon monoxide and formate, and does not lie on the methionine recycle pathway. In Yarrowia lipolytica (strain CLIB 122 / E 150) (Yeast), this protein is Acireductone dioxygenase.